A 437-amino-acid polypeptide reads, in one-letter code: MKLSGSSALLLLGFGLLGHASPLVHVQGKNCTVKPLGHGQDDVPNILHAVEKCGQTPGGRISLPAPYTYRINQRMTTHLESSTLEVGGMLLFSDDITYWVNNSYRIDFQNQSTAWRITGHDYVVDGGPERGGIDGNGQLWYTWAKGGSNVFGRPMPLHVLNSTRAVLRNIAIRQPQFWAVLVESSSHVELDNFYVNATNSDPNATEDTVWIQNTDGIDTYRSDHVTITNWVYEGGDDAVAFKPNSTNIHVENVTVYGGPGIAFGSLGQYPDRYDIVENITVKNANFQPSSQRAMNSGIYFKSWIGVNFGVPPNGGGNGHGYVRNVTVEDITFKDVQLPIYIDTCLSYLFDQNVTQYCDTSTFRFDDLHFRNISGNGLATPTNYTGRNITFAVSMICSKEAPCTDITFEDVDIKLPESYSGKSVLCENAGVQGLECNS.

The first 20 residues, 1–20 (MKLSGSSALLLLGFGLLGHA), serve as a signal peptide directing secretion. 6 N-linked (GlcNAc...) asparagine glycosylation sites follow: Asn-30, Asn-101, Asn-110, Asn-161, Asn-196, and Asn-203. Residues 222–243 (SDHVTITNWVYEGGDDAVAFKP) form a PbH1 1 repeat. Asp-236 acts as the Proton donor in catalysis. 8 N-linked (GlcNAc...) asparagine glycosylation sites follow: Asn-244, Asn-252, Asn-278, Asn-324, Asn-352, Asn-371, Asn-382, and Asn-387. 3 PbH1 repeats span residues 245–265 (STNI…AFGS), 276–302 (VENI…YFKS), and 322–343 (VRNV…YIDT). A disulfide bridge connects residues Cys-396 and Cys-402.

Belongs to the glycosyl hydrolase 28 family.

It localises to the secreted. The enzyme catalyses [(1-&gt;4)-alpha-D-galacturonosyl](n) + H2O = alpha-D-galacturonate + [(1-&gt;4)-alpha-D-galacturonosyl](n-1). Functionally, specific in hydrolyzing the terminal glycosidic bond of polygalacturonic acid and oligogalacturonates. The protein is Putative galacturan 1,4-alpha-galacturonidase A (rgxA) of Aspergillus flavus (strain ATCC 200026 / FGSC A1120 / IAM 13836 / NRRL 3357 / JCM 12722 / SRRC 167).